Consider the following 480-residue polypeptide: Altronate oxidoreductase (480 aa).

19–30 serves as a coordination point for NAD(+); sequence ILQFGEGNFLRG.

Belongs to the mannitol dehydrogenase family. UxaB subfamily.

It catalyses the reaction D-altronate + NAD(+) = keto-D-tagaturonate + NADH + H(+). It participates in carbohydrate metabolism; pentose and glucuronate interconversion. This Bacillus subtilis (strain 168) protein is Altronate oxidoreductase.